The following is a 647-amino-acid chain: Macrolide export ATP-binding/permease protein MacB (647 aa).

Positions 7–245 (IRLEDICKTF…EATLQPHEEI (239 aa)) constitute an ABC transporter domain. 43–50 (GASGSGKS) provides a ligand contact to ATP. 4 helical membrane-spanning segments follow: residues 274–294 (VLTL…LAIG), 529–549 (VAAI…LVSV), 573–593 (FIIE…ILGL), and 610–630 (FGPV…FGFL).

This sequence belongs to the ABC transporter superfamily. Macrolide exporter (TC 3.A.1.122) family. In terms of assembly, homodimer.

Its subcellular location is the cell inner membrane. Its function is as follows. Non-canonical ABC transporter that contains transmembrane domains (TMD), which form a pore in the inner membrane, and an ATP-binding domain (NBD), which is responsible for energy generation. Confers resistance against macrolides. In Brucella melitensis biotype 1 (strain ATCC 23456 / CCUG 17765 / NCTC 10094 / 16M), this protein is Macrolide export ATP-binding/permease protein MacB.